The following is a 490-amino-acid chain: Probable cytochrome P450 518B1 (490 aa).

Residues 2-22 (LTNIIILIILYLFYDFCYKNF) traverse the membrane as a helical segment. Cysteine 437 serves as a coordination point for heme.

The protein belongs to the cytochrome P450 family. Heme serves as cofactor.

It is found in the membrane. The polypeptide is Probable cytochrome P450 518B1 (cyp518B1) (Dictyostelium discoideum (Social amoeba)).